We begin with the raw amino-acid sequence, 529 residues long: Laccase-1 (529 aa).

An N-terminal signal peptide occupies residues 1–23; that stretch reads MFPGARILATLTLALHLLHGTHA. 3 Plastocyanin-like domains span residues 25 to 159, 170 to 312, and 380 to 499; these read IGPT…FIVY, DVDN…ILRY, and TAPV…FAED. The N-linked (GlcNAc...) asparagine glycan is linked to N57. 4 residues coordinate Cu cation: H96, H98, H141, and H143. 2 disulfides stabilise this stretch: C117-C514 and C149-C236. N239 and N282 each carry an N-linked (GlcNAc...) asparagine glycan. The Cu cation site is built by H425, H428, H430, H481, C482, H483, and H487.

The protein belongs to the multicopper oxidase family. Cu cation is required as a cofactor.

It is found in the secreted. The catalysed reaction is 4 hydroquinone + O2 = 4 benzosemiquinone + 2 H2O. Its function is as follows. Lignin degradation and detoxification of lignin-derived products. This is Laccase-1 (POX1) from Pleurotus ostreatus (Oyster mushroom).